The following is a 285-amino-acid chain: Urease accessory protein UreD (285 aa).

It belongs to the UreD family. In terms of assembly, ureD, UreF and UreG form a complex that acts as a GTP-hydrolysis-dependent molecular chaperone, activating the urease apoprotein by helping to assemble the nickel containing metallocenter of UreC. The UreE protein probably delivers the nickel.

The protein resides in the cytoplasm. Functionally, required for maturation of urease via the functional incorporation of the urease nickel metallocenter. This Citrobacter koseri (strain ATCC BAA-895 / CDC 4225-83 / SGSC4696) protein is Urease accessory protein UreD.